An 831-amino-acid polypeptide reads, in one-letter code: Prolactin receptor (831 aa).

The signal sequence occupies residues 1–23 (MKQDLISSVQIILFLPLTTVGLA). Topologically, residues 24 to 438 (GQSFPGKPKI…QIPNDFRVKD (415 aa)) are extracellular. 4 Fibronectin type-III domains span residues 30 to 128 (KPKI…VQPG), 129 to 227 (SPVN…IPSG), 230 to 331 (PPEK…VQPD), and 332 to 433 (PPVN…IPND). A disulfide bond links cysteine 36 and cysteine 46. The N-linked (GlcNAc...) asparagine glycan is linked to asparagine 59. Cysteine 75 and cysteine 86 are joined by a disulfide. 8 N-linked (GlcNAc...) asparagine glycosylation sites follow: asparagine 91, asparagine 100, asparagine 112, asparagine 132, asparagine 262, asparagine 303, asparagine 315, and asparagine 335. The Zn(2+) site is built by aspartate 414 and histidine 416. Residues 419–423 (WSEWS) carry the WSXWS motif motif. Residues 439–459 (MIVWIVLGVLSSLICLIMSWT) traverse the membrane as a helical segment. Residues 460–831 (MVLKGYRMIT…DPSSFMPSFK (372 aa)) lie on the Cytoplasmic side of the membrane. Residues 471-479 (MLPPVPGPK) carry the Box 1 motif motif. Disordered regions lie at residues 527–563 (QQLMPSHDNGHPSKNAKITRKETDSDSGRGSCDSPSL), 774–796 (RVPHTPASQEPAKETSQSLQQGQ), and 808–831 (PSDCKRETGGSEYMDPSSFMPSFK). Residues 787-796 (ETSQSLQQGQ) are compositionally biased toward polar residues.

Belongs to the type I cytokine receptor family. Type 1 subfamily.

The protein resides in the membrane. This is a receptor for the anterior pituitary hormone prolactin. The chain is Prolactin receptor (PRLR) from Gallus gallus (Chicken).